Reading from the N-terminus, the 292-residue chain is 2-(5''-triphosphoribosyl)-3'-dephosphocoenzyme-A synthase (292 aa).

The protein belongs to the CitG/MdcB family.

The catalysed reaction is 3'-dephospho-CoA + ATP = 2'-(5''-triphospho-alpha-D-ribosyl)-3'-dephospho-CoA + adenine. Catalyzes the formation of 2-(5''-triphosphoribosyl)-3'-dephosphocoenzyme-A, the precursor of the prosthetic group of the holo-acyl carrier protein (gamma chain) of citrate lyase, from ATP and dephospho-CoA. This chain is 2-(5''-triphosphoribosyl)-3'-dephosphocoenzyme-A synthase, found in Escherichia coli O127:H6 (strain E2348/69 / EPEC).